The sequence spans 374 residues: uncharacterized protein (374 aa).

Over residues 1 to 13 (METKYHEYDDVQT) the composition is skewed to basic and acidic residues. Disordered regions lie at residues 1 to 20 (METK…PSNK), 91 to 193 (SPMT…PLNQ), and 236 to 374 (KINN…SDFE). Positions 95-155 (NNNNNNNNNN…NNSSNNNNNN (61 aa)) are enriched in low complexity. The segment covering 166–193 (ISSNQSSPLSIYSTPPNPSSYVSSPLNQ) has biased composition (polar residues). Residues 242–262 (APPPPPKACAPPPPPPPPPPI) are compositionally biased toward pro residues. The segment covering 277–300 (NNNNNNNNNNNSSNTNDSNNTNNT) has biased composition (low complexity).

This is an uncharacterized protein from Dictyostelium discoideum (Social amoeba).